We begin with the raw amino-acid sequence, 754 residues long: MTPATAEVKVGGRKRKNDEPVFIKTKQSRSARREEEKENLLNKSLPSTPTSSEAGSSRESSNPVTSSSRRKNPPTKLENIQKTLPTCSDGLEIRNYVKKYGLPEDNKFLVRNVFDKQLLFGKKYVCRRRVIKSIDEFFPRLKTDAHRENGLYNFCTLQFMKISSWGSSMDEKIYVTSAAIVQSYVIIVDDNDSVTCIENGISVIPMANRTLPSISYNSSNVKNITLTGPELKKAKNVYLAVIVKRKTPKLGENRVGTRGKSTRASFETAASSENFQQLVRFGCTLMYDKDAEINCLNDGVQRIILLDREEKPAYLKIFGKADEPELENAWMNNVKHLEFISDTNYNKEDSHLARLIFSSNTHNYFDRPDISKFSPWQPRSRRTTLKSGISVEPGTSCDEDCGSQYEDTITLKQLLLGTKKLCGRRKRHLTRLTSRWPCFSVDPTKINSYFNETGVTLLENSCSYRPGTQRSIPIKPTRVIRVREETPVSVPIEVITIEDDSDDSPCFSARNRAPGGTRKYGLDFIQSSGHMPYIRYVYMNRANDLVPQLNGEENGKIEGLMEAYPMNNAHMYSDIEFLRKEKLNLPKNAQKYGEMTILDYPLTKTETDEYNKKMSVMNVKDFAVKPRKPIPTVGNTTLSLDLEGCPISTFSEIFFPSGKTELFNILCRHFYSEAGQRPGCFSAQWKSRVLTGFINKYHQYIFDMKLNSLFEKQINLIAMVSPDWKLEDFELPMVRYKQLKKEWKNRQRDIPSSN.

The interval 1–83 (MTPATAEVKV…PTKLENIQKT (83 aa)) is disordered. Residues 31–40 (ARREEEKENL) show a composition bias toward basic and acidic residues. Over residues 51 to 61 (SSEAGSSRESS) the composition is skewed to low complexity.

In terms of assembly, forms a heterotrimeric complex with the Polycomb proteins mes-2 and mes-3. Does not interact with mes-4. Interacts with nyfa-1. In adults, it is predominantly expressed in the germline, and weakly expressed in intestinal cells.

The protein localises to the nucleus. Functionally, component of a Polycomb group (PcG) complex. PcG proteins act by forming multiprotein complexes, which are required to maintain the transcriptionally repressive state of homeotic genes throughout development. In association with the nfya-1-NF-Y complex, may play a role in repressing the expression of the homeobox protein egl-5 in tissues such as the head. PcG proteins are not required to initiate repression, but to maintain it during later stages of development. The mes-2/mes-3/mes-6 complex may participate in the global inactivation of the X chromosomes in germline cells. The complex may act via methylation of histone H3 'Lys-27', rendering chromatin heritably changed in its expressibility. This complex is required to exclude mes-4 from the inactivated X-chromosomes in germline cells. The protein is Polycomb protein mes-3 of Caenorhabditis elegans.